Here is a 373-residue protein sequence, read N- to C-terminus: Chaperone protein DnaJ (373 aa).

Residues 4-69 form the J domain; the sequence is SYYEILEITQ…EKRAIYDRYG (66 aa). The CR-type zinc-finger motif lies at 135–212; the sequence is GCKKNIDFTY…CKGLGYNESK (78 aa). Cysteine 148, cysteine 151, cysteine 164, cysteine 167, cysteine 186, cysteine 189, cysteine 200, and cysteine 203 together coordinate Zn(2+). CXXCXGXG motif repeat units follow at residues 148–155, 164–171, 186–193, and 200–207; these read CKTCNGTG, CPKCQGRG, CPDCQGIG, and CSDCKGLG.

The protein belongs to the DnaJ family. Homodimer. The cofactor is Zn(2+).

The protein localises to the cytoplasm. Its function is as follows. Participates actively in the response to hyperosmotic and heat shock by preventing the aggregation of stress-denatured proteins and by disaggregating proteins, also in an autonomous, DnaK-independent fashion. Unfolded proteins bind initially to DnaJ; upon interaction with the DnaJ-bound protein, DnaK hydrolyzes its bound ATP, resulting in the formation of a stable complex. GrpE releases ADP from DnaK; ATP binding to DnaK triggers the release of the substrate protein, thus completing the reaction cycle. Several rounds of ATP-dependent interactions between DnaJ, DnaK and GrpE are required for fully efficient folding. Also involved, together with DnaK and GrpE, in the DNA replication of plasmids through activation of initiation proteins. The chain is Chaperone protein DnaJ from Campylobacter jejuni (strain RM1221).